We begin with the raw amino-acid sequence, 220 residues long: DNA-directed RNA polymerase subunit alpha (220 aa).

Belongs to the RNA polymerase alpha chain family. In terms of assembly, in plastids the minimal PEP RNA polymerase catalytic core is composed of four subunits: alpha, beta, beta', and beta''. When a (nuclear-encoded) sigma factor is associated with the core the holoenzyme is formed, which can initiate transcription.

The protein resides in the plastid. It catalyses the reaction RNA(n) + a ribonucleoside 5'-triphosphate = RNA(n+1) + diphosphate. DNA-dependent RNA polymerase catalyzes the transcription of DNA into RNA using the four ribonucleoside triphosphates as substrates. The protein is DNA-directed RNA polymerase subunit alpha (rpoA) of Euglena longa (Euglenophycean alga).